Reading from the N-terminus, the 154-residue chain is SsrA-binding protein (154 aa).

A disordered region spans residues 134-154 (QREDLKRRAEDRDTQRELARF).

It belongs to the SmpB family.

Its subcellular location is the cytoplasm. Required for rescue of stalled ribosomes mediated by trans-translation. Binds to transfer-messenger RNA (tmRNA), required for stable association of tmRNA with ribosomes. tmRNA and SmpB together mimic tRNA shape, replacing the anticodon stem-loop with SmpB. tmRNA is encoded by the ssrA gene; the 2 termini fold to resemble tRNA(Ala) and it encodes a 'tag peptide', a short internal open reading frame. During trans-translation Ala-aminoacylated tmRNA acts like a tRNA, entering the A-site of stalled ribosomes, displacing the stalled mRNA. The ribosome then switches to translate the ORF on the tmRNA; the nascent peptide is terminated with the 'tag peptide' encoded by the tmRNA and targeted for degradation. The ribosome is freed to recommence translation, which seems to be the essential function of trans-translation. The protein is SsrA-binding protein of Nitratidesulfovibrio vulgaris (strain ATCC 29579 / DSM 644 / CCUG 34227 / NCIMB 8303 / VKM B-1760 / Hildenborough) (Desulfovibrio vulgaris).